Reading from the N-terminus, the 352-residue chain is Methylthioribose-1-phosphate isomerase (352 aa).

Residues 49-51 (RGA), Arg-93, and Gln-202 each bind substrate. Asp-243 functions as the Proton donor in the catalytic mechanism. Residue 253-254 (NK) participates in substrate binding.

This sequence belongs to the eIF-2B alpha/beta/delta subunits family. MtnA subfamily.

It catalyses the reaction 5-(methylsulfanyl)-alpha-D-ribose 1-phosphate = 5-(methylsulfanyl)-D-ribulose 1-phosphate. The protein operates within amino-acid biosynthesis; L-methionine biosynthesis via salvage pathway; L-methionine from S-methyl-5-thio-alpha-D-ribose 1-phosphate: step 1/6. In terms of biological role, catalyzes the interconversion of methylthioribose-1-phosphate (MTR-1-P) into methylthioribulose-1-phosphate (MTRu-1-P). This is Methylthioribose-1-phosphate isomerase from Magnetococcus marinus (strain ATCC BAA-1437 / JCM 17883 / MC-1).